Consider the following 101-residue polypeptide: Ferredoxin-3 (101 aa).

4Fe-4S ferredoxin-type domains follow at residues 17-46 (YLMK…LHGL) and 70-100 (KVMA…HAAL). [4Fe-4S] cluster contacts are provided by C26, C29, C32, C36, C80, C83, C86, and C90.

Homodimer. [4Fe-4S] cluster serves as cofactor.

Its function is as follows. Ferredoxins are iron-sulfur proteins that transfer electrons in a wide variety of metabolic reactions. This is Ferredoxin-3 (fdxB) from Rhodobacter capsulatus (Rhodopseudomonas capsulata).